A 377-amino-acid polypeptide reads, in one-letter code: Chaperone protein DnaJ (377 aa).

Residues 5–69 (DYYEVLGISK…QKRAQYDQYG (65 aa)) enclose the J domain. Residues 134 to 216 (GKDAEIEIPR…CHGKGRVTKT (83 aa)) form a CR-type zinc finger. The Zn(2+) site is built by Cys-147, Cys-150, Cys-164, Cys-167, Cys-190, Cys-193, Cys-204, and Cys-207. CXXCXGXG motif repeat units lie at residues 147-154 (CDTCHGSG), 164-171 (CSHCGGKG), 190-197 (CQYCNGTG), and 204-211 (CPTCHGKG).

Belongs to the DnaJ family. In terms of assembly, homodimer. Zn(2+) is required as a cofactor.

It localises to the cytoplasm. In terms of biological role, participates actively in the response to hyperosmotic and heat shock by preventing the aggregation of stress-denatured proteins and by disaggregating proteins, also in an autonomous, DnaK-independent fashion. Unfolded proteins bind initially to DnaJ; upon interaction with the DnaJ-bound protein, DnaK hydrolyzes its bound ATP, resulting in the formation of a stable complex. GrpE releases ADP from DnaK; ATP binding to DnaK triggers the release of the substrate protein, thus completing the reaction cycle. Several rounds of ATP-dependent interactions between DnaJ, DnaK and GrpE are required for fully efficient folding. Also involved, together with DnaK and GrpE, in the DNA replication of plasmids through activation of initiation proteins. This is Chaperone protein DnaJ from Listeria monocytogenes serotype 1/2a (strain 10403S).